The following is a 471-amino-acid chain: Heat shock 70 kDa protein 13 (471 aa).

A signal peptide spans 1 to 22; sequence MAGEMTILGSAVLTLLLAGYLA. A compositionally biased stretch (basic and acidic residues) spans 317–330; it reads DSKEPQNGDSELPK. Residues 317–350 form a disordered region; sequence DSKEPQNGDSELPKDQLTPGDGHHVNRVFRPGLS.

It belongs to the heat shock protein 70 family. As to quaternary structure, binds UBQLN2.

It localises to the microsome. The protein resides in the endoplasmic reticulum. In terms of biological role, has peptide-independent ATPase activity. The protein is Heat shock 70 kDa protein 13 (Hspa13) of Mus musculus (Mouse).